We begin with the raw amino-acid sequence, 653 residues long: ATP-dependent rRNA helicase SPB4 (653 aa).

A Q motif motif is present at residues 17 to 45 (WQALTPPLSEWILDAVAAMGFTRMTPVQA). One can recognise a Helicase ATP-binding domain in the interval 48–257 (IPLFMGHKDV…RVGLRNPVKI (210 aa)). Position 61–68 (61–68 (AVTGSGKT)) interacts with ATP. Residues 205–208 (DEAD) carry the DEAD box motif. Residues 291–444 (AIRQILNSID…SPPVALSDTL (154 aa)) enclose the Helicase C-terminal domain. The segment at 534 to 653 (KQREKHRQES…DGESEFEGFD (120 aa)) is disordered. The segment covering 558–569 (PSSSSNNDTAPW) has biased composition (polar residues). Residues 571 to 627 (KTLEKKSDKEKRRERKRAKKEREHWEKMTEEEKTKSRETHQMLEELRKKNRQELNAK) adopt a coiled-coil conformation. Basic and acidic residues-rich tracts occupy residues 572 to 581 (TLEKKSDKEK) and 590 to 626 (KERE…ELNA). The segment covering 627 to 636 (KSHTSSSVLS) has biased composition (polar residues). The segment covering 641–653 (AELDGESEFEGFD) has biased composition (acidic residues).

It belongs to the DEAD box helicase family. DDX55/SPB4 subfamily. Component of pre-60S ribosomal complexes.

It localises to the nucleus. It is found in the nucleolus. It carries out the reaction ATP + H2O = ADP + phosphate + H(+). Its function is as follows. ATP-binding RNA helicase involved in the biogenesis of 60S ribosomal subunits. Binds 90S pre-ribosomal particles and dissociates from pre-60S ribosomal particles after processing of 27SB pre-rRNA. Required for the normal formation of 18S rRNA through the processing of pre-rRNAs at sites A0, A1 and A2, and the normal formation of 25S and 5.8S rRNAs through the processing of pre-rRNAs at sites C1 and C2. This chain is ATP-dependent rRNA helicase SPB4, found in Coccidioides immitis (strain RS) (Valley fever fungus).